We begin with the raw amino-acid sequence, 284 residues long: Tryptophan 2,3-dioxygenase (284 aa).

Substrate is bound by residues 53-57 (FIIQH) and arginine 119. Histidine 242 is a heme binding site. Residue threonine 256 coordinates substrate.

The protein belongs to the tryptophan 2,3-dioxygenase family. As to quaternary structure, homotetramer. Requires heme as cofactor.

It carries out the reaction L-tryptophan + O2 = N-formyl-L-kynurenine. It participates in amino-acid degradation; L-tryptophan degradation via kynurenine pathway; L-kynurenine from L-tryptophan: step 1/2. The protein operates within siderophore biosynthesis; quinolobactin biosynthesis. Heme-dependent dioxygenase that catalyzes the oxidative cleavage of the L-tryptophan (L-Trp) pyrrole ring and converts L-tryptophan to N-formyl-L-kynurenine. Catalyzes the oxidative cleavage of the indole moiety. Required for synthesis of the siderophore quinolobactin. In Pseudomonas fluorescens, this protein is Tryptophan 2,3-dioxygenase.